The following is a 362-amino-acid chain: MASSGGQIGGVLDHHVQRAVCDSRAKYREGRRPRAVKVYTINLESWYLLIQGVPAVGAMKELVERFALYGTIEQYNALDEYPAEDFTEVYLIKFLNLQSARIAKRKMDEQSFFGGLLHVCYAPEFETVEETRKKLRERNAYVARMTKNKDHYMTKKHKDAKDFRGAFHSKTSGFPAASLNTSTGNSDLCLPYSSELPLCYFSPKCKCSSGERVDRPSNSSQDGRNFDETLGRCDHCDSLQKMQMKTLQNSLARPGTQKALTPSEAVDRFMPRTTQLQERKRRREDDCKRETLAEACTSSKEVMIGPQLPGIPKVDTHDGSWNTTASLIREKLKEVISSVPKPPEDKVEDVHRSRPLKQRRRI.

Residues 46–124 (WYLLIQGVPA…GLLHVCYAPE (79 aa)) form the RRM domain. Positions 334–362 (EVISSVPKPPEDKVEDVHRSRPLKQRRRI) are disordered. Over residues 342 to 352 (PPEDKVEDVHR) the composition is skewed to basic and acidic residues. Basic residues predominate over residues 353-362 (SRPLKQRRRI).

This sequence belongs to the RBM48 family. Component of the minor spliceosome. Within this complex, interacts with ARMC7 and PRPF8/PRP8.

In terms of biological role, as a component of the minor spliceosome, involved in the splicing of U12-type introns in pre-mRNAs. The polypeptide is RNA-binding protein 48 (RBM48) (Bos taurus (Bovine)).